The chain runs to 63 residues: Large ribosomal subunit protein bL32 (63 aa).

The disordered stretch occupies residues 1–27; that stretch reads MANPKAKMSKSRRDKRRAQFNARTKPV. Positions 7–18 are enriched in basic residues; the sequence is KMSKSRRDKRRA.

The protein belongs to the bacterial ribosomal protein bL32 family.

The sequence is that of Large ribosomal subunit protein bL32 from Chlorobium phaeobacteroides (strain DSM 266 / SMG 266 / 2430).